A 339-amino-acid chain; its full sequence is MKPNNPPRIAVLLVNLGTPDEPTAPAVRRYLKQFLSDPRVIEIPQFLWAIILNLFVLPTRPKRVAEAYASVWEGDSPIRKILNQQVDKLHARLEGSMGPFNISVHPAMSYGNPGLPDVMDKLCAEGVEHFVILPLFPQYSATSGGAVYDALTKWSLKQRNLPSYTIVKDYFAHPLYIKALADSIRRFQAVHGKPDKLMFSFHGIPQPYADKGDPYPKRCKCTAAQVAQELGLSQDEWIISFQSRFGKQEWVKPYTDVTLEQWGKAGVRSVQVVSPAFSADCLETLEELAMENRDNFINAGGQEYHYIPALNDDEAHIDLMEALAKPLVAGWASTLEGWT.

Fe cation contacts are provided by H202 and E283.

It belongs to the ferrochelatase family.

The protein localises to the cytoplasm. It catalyses the reaction heme b + 2 H(+) = protoporphyrin IX + Fe(2+). It functions in the pathway porphyrin-containing compound metabolism; protoheme biosynthesis; protoheme from protoporphyrin-IX: step 1/1. Functionally, catalyzes the ferrous insertion into protoporphyrin IX. This Psychrobacter sp. (strain PRwf-1) protein is Ferrochelatase.